A 330-amino-acid chain; its full sequence is Ribosomal RNA small subunit methyltransferase C (330 aa).

It belongs to the methyltransferase superfamily. RsmC family. As to quaternary structure, monomer.

The protein localises to the cytoplasm. The catalysed reaction is guanosine(1207) in 16S rRNA + S-adenosyl-L-methionine = N(2)-methylguanosine(1207) in 16S rRNA + S-adenosyl-L-homocysteine + H(+). In terms of biological role, specifically methylates the guanine in position 1207 of 16S rRNA in the 30S particle. The sequence is that of Ribosomal RNA small subunit methyltransferase C from Haemophilus influenzae (strain PittGG).